The primary structure comprises 495 residues: RuBisCO large subunit-binding protein subunit alpha (495 aa).

The protein belongs to the chaperonin (HSP60) family. Oligomer of probably six alpha and six beta subunits.

The protein localises to the plastid. It localises to the chloroplast. In terms of biological role, this protein binds RuBisCO small and large subunits and is implicated in the assembly of the enzyme oligomer. The polypeptide is RuBisCO large subunit-binding protein subunit alpha (Ricinus communis (Castor bean)).